We begin with the raw amino-acid sequence, 200 residues long: Molybdenum cofactor guanylyltransferase (200 aa).

GTP is bound by residues 15-17 (LAG), lysine 28, aspartate 74, and aspartate 104. Aspartate 104 contacts Mg(2+).

It belongs to the MobA family. Monomer. Mg(2+) is required as a cofactor.

Its subcellular location is the cytoplasm. The enzyme catalyses Mo-molybdopterin + GTP + H(+) = Mo-molybdopterin guanine dinucleotide + diphosphate. Transfers a GMP moiety from GTP to Mo-molybdopterin (Mo-MPT) cofactor (Moco or molybdenum cofactor) to form Mo-molybdopterin guanine dinucleotide (Mo-MGD) cofactor. The polypeptide is Molybdenum cofactor guanylyltransferase (Pseudomonas fluorescens (strain Pf0-1)).